A 507-amino-acid polypeptide reads, in one-letter code: Archaeal-type glutamate synthase [NADPH] (507 aa).

4Fe-4S ferredoxin-type domains lie at 10–39 (FVVE…YDEN) and 41–70 (NRVY…VRKN). C19, C22, C25, C29, C50, C53, C56, and C60 together coordinate [4Fe-4S] cluster.

It belongs to the glutamate synthase family. Requires FMN as cofactor.

It catalyses the reaction 2 L-glutamate + NADP(+) = L-glutamine + 2-oxoglutarate + NADPH + H(+). The sequence is that of Archaeal-type glutamate synthase [NADPH] from Thermotoga maritima (strain ATCC 43589 / DSM 3109 / JCM 10099 / NBRC 100826 / MSB8).